A 663-amino-acid chain; its full sequence is UvrABC system protein B (663 aa).

The Helicase ATP-binding domain occupies 31–271 (DNIEGGEKAQ…EASIAKIQAE (241 aa)). 44-51 (GATGTGKT) is an ATP binding site. The short motif at 97-120 (YYDYYQPEAYVPSSDTYIEKDSSV) is the Beta-hairpin element. Residues 435 to 601 (QMDDLLGEIN…TIKKEIRDLI (167 aa)) enclose the Helicase C-terminal domain. In terms of domain architecture, UVR spans 627-662 (QEAIKKLQKQMHEAAELLDFELAAQIRDMVLELKSM).

It belongs to the UvrB family. As to quaternary structure, forms a heterotetramer with UvrA during the search for lesions. Interacts with UvrC in an incision complex.

It is found in the cytoplasm. The UvrABC repair system catalyzes the recognition and processing of DNA lesions. A damage recognition complex composed of 2 UvrA and 2 UvrB subunits scans DNA for abnormalities. Upon binding of the UvrA(2)B(2) complex to a putative damaged site, the DNA wraps around one UvrB monomer. DNA wrap is dependent on ATP binding by UvrB and probably causes local melting of the DNA helix, facilitating insertion of UvrB beta-hairpin between the DNA strands. Then UvrB probes one DNA strand for the presence of a lesion. If a lesion is found the UvrA subunits dissociate and the UvrB-DNA preincision complex is formed. This complex is subsequently bound by UvrC and the second UvrB is released. If no lesion is found, the DNA wraps around the other UvrB subunit that will check the other stand for damage. The polypeptide is UvrABC system protein B (Streptococcus uberis (strain ATCC BAA-854 / 0140J)).